Here is a 1167-residue protein sequence, read N- to C-terminus: Integrin alpha-10 (1167 aa).

Residues 1-22 form the signal peptide; the sequence is MELPFVTHLFLPLVFLTGLCSP. The Extracellular segment spans residues 23–1122; the sequence is FNLDEHHPRL…VVQTRPILIS (1100 aa). FG-GAP repeat units lie at residues 24 to 85 and 95 to 154; these read NLDE…HNAP and QLGN…PQGS. Cys76 and Cys86 are oxidised to a cystine. N-linked (GlcNAc...) asparagine glycosylation is found at Asn98, Asn234, Asn336, and Asn364. One can recognise a VWFA domain in the interval 167–350; it reads DVVIVLDGSN…AALTDIVDAL (184 aa). 5 FG-GAP repeats span residues 361–412, 417–470, 472–534, 535–593, and 597–657; these read HAEN…LFPP, EDEF…KDGA, RVAQ…SLLT, LQGT…GVRP, and QRIA…VTPQ. Residues Asp494, Asp496, Asp498, Asp502, Asp558, Asn560, Asp562, Asp566, Asp620, Asp622, Asp624, and Asp628 each coordinate Ca(2+). 2 disulfide bridges follow: Cys666-Cys675 and Cys681-Cys736. Asn733 and Asn763 each carry an N-linked (GlcNAc...) asparagine glycan. A disulfide bond links Cys789 and Cys795. N-linked (GlcNAc...) asparagine glycosylation is found at Asn839, Asn921, Asn1011, Asn1018, and Asn1039. Residues 1123 to 1145 traverse the membrane as a helical segment; the sequence is LWILIGSVLGGLLLLALLVFCLW. Over 1146 to 1167 the chain is Cytoplasmic; it reads KLGFFAHKKIPEEEKREEKLEQ.

It belongs to the integrin alpha chain family. Heterodimer of an alpha and a beta subunit. Alpha-10 associates with beta-1. In terms of tissue distribution, widely expressed with highest expression in muscle and heart. Found in articular cartilage.

The protein resides in the membrane. In terms of biological role, integrin alpha-10/beta-1 is a receptor for collagen. This is Integrin alpha-10 (ITGA10) from Homo sapiens (Human).